The chain runs to 391 residues: L-tryptophan--pyruvate aminotransferase 1 (391 aa).

Residues Tyr58, 100-101, Asn168, 191-194, 214-217, and Arg225 each bind pyridoxal 5'-phosphate; these read ST, DFAY, and TFSK. Lys217 is modified (N6-(pyridoxal phosphate)lysine).

This sequence belongs to the alliinase family. Requires pyridoxal 5'-phosphate as cofactor. As to expression, expressed at the leaf margin and in the vasculature of emerging young leaves. Expressed in the quiescent center and in the vasculature of root tips. Detected in the shoot apical meristem, stems, sepals, stamen filaments, the shoot and root junction, the stigma and the base of the silique.

It localises to the cytoplasm. It carries out the reaction L-tryptophan + 2-oxoglutarate = indole-3-pyruvate + L-glutamate. The enzyme catalyses L-tryptophan + pyruvate = indole-3-pyruvate + L-alanine. Its pathway is plant hormone metabolism; auxin biosynthesis. Inhibited by L-kynurenine. L-tryptophan aminotransferase involved in auxin (IAA) biosynthesis. Can convert L-tryptophan and pyruvate to indole-3-pyruvic acid (IPA) and alanine. Catalyzes the first step in IPA branch of the auxin biosynthetic pathway. Required for auxin production to initiate multiple change in growth in response to environmental and developmental cues. It is also active with phenylalanine, tyrosine, leucine, alanine, methionine and glutamine. Both TAA1 and TAR2 are required for maintaining proper auxin levels in roots, while TAA1, TAR1 and TAR2 are required for proper embryo patterning. Involved in the maintenance of the root stem cell niches and required for shade avoidance. This chain is L-tryptophan--pyruvate aminotransferase 1 (TAA1), found in Arabidopsis thaliana (Mouse-ear cress).